A 159-amino-acid chain; its full sequence is Heat shock protein beta-9 (159 aa).

The sHSP domain occupies Leu36 to Leu147.

The protein belongs to the small heat shock protein (HSP20) family. As to expression, testis specific.

Its subcellular location is the cytoplasm. It is found in the nucleus. This chain is Heat shock protein beta-9 (HSPB9), found in Homo sapiens (Human).